The primary structure comprises 551 residues: Podocalyxin (551 aa).

Positions 1-21 (MRSALALAALLLLLLSPPSLS) are cleaved as a signal peptide. Residues 18 to 324 (PSLSQEKSPQ…QRVSCGPPER (307 aa)) are disordered. The Extracellular portion of the chain corresponds to 22–452 (QEKSPQPGPT…PPEETEDRFS (431 aa)). Residues 32–59 (PMATSTSTRPAPASAPAPKSSVAASVPA) are compositionally biased toward low complexity. The segment covering 60-90 (EQNTTPMTTKAPATQSPSASPGSSVENSAPA) has biased composition (polar residues). The segment covering 91 to 104 (QGSTTTQQSLSVTT) has biased composition (low complexity). Positions 142-164 (APSNHSITTKPLATEATSQAPRQ) are enriched in polar residues. 2 N-linked (GlcNAc...) asparagine glycosylation sites follow: asparagine 145 and asparagine 180. Residues 234–244 (PVASSAETQGM) show a composition bias toward polar residues. A compositionally biased stretch (low complexity) spans 289-300 (TSSSTELASTAL). N-linked (GlcNAc...) asparagine glycosylation occurs at asparagine 333. A helical membrane pass occupies residues 453-473 (LPLIITIVCMASFLLLVAALY). Residues 474-551 (GCCHQRLSHR…DLDEEEDTHL (78 aa)) are Cytoplasmic-facing. Residue threonine 511 is modified to Phosphothreonine. Serine 530 carries the phosphoserine modification. The residue at position 549 (threonine 549) is a Phosphothreonine.

Belongs to the podocalyxin family. As to quaternary structure, monomer; when associated with the membrane raft. Oligomer; when integrated in the apical membrane. Found in a complex with EZR, PODXL and NHERF2. Associates with the actin cytoskeleton through complex formation with EZR and NHERF2. Interacts (via the C-terminal PDZ-binding motif DTHL) with NHERF1 (via the PDZ domains); interaction is not detected in glomerular epithelium cells, take place early in the secretory pathway and is necessary for its apical membrane sorting. Interacts (via the C-terminal PDZ-binding motif DTHL) with NHERF2 (via the PDZ 1 domain); interaction is detected in glomerular epithelium cells. Interacts with EZR. Post-translationally, N- and O-linked glycosylated. Sialoglycoprotein. In terms of tissue distribution, glomerular epithelium cell (podocyte) and endothelial cells.

Its subcellular location is the apical cell membrane. The protein localises to the cell projection. The protein resides in the microvillus. It localises to the membrane raft. It is found in the lamellipodium. Its subcellular location is the filopodium. The protein localises to the ruffle. The protein resides in the membrane. Its function is as follows. Involved in the regulation of both adhesion and cell morphology and cancer progression. Functions as an anti-adhesive molecule that maintains an open filtration pathway between neighboring foot processes in the podocyte by charge repulsion. Acts as a pro-adhesive molecule, enhancing the adherence of cells to immobilized ligands, increasing the rate of migration and cell-cell contacts in an integrin-dependent manner. Induces the formation of apical actin-dependent microvilli. Involved in the formation of a preapical plasma membrane subdomain to set up initial epithelial polarization and the apical lumen formation during renal tubulogenesis. Plays a role in cancer development and aggressiveness by inducing cell migration and invasion through its interaction with the actin-binding protein EZR. Affects EZR-dependent signaling events, leading to increased activities of the MAPK and PI3K pathways in cancer cells. The sequence is that of Podocalyxin (PODXL) from Oryctolagus cuniculus (Rabbit).